Here is a 371-residue protein sequence, read N- to C-terminus: N-methyl-L-tryptophan oxidase (371 aa).

Residue 4–34 (DLIVIGSGSVGSAAGYYASQAGLNVLMIDSA) participates in FAD binding. Cys-307 carries the S-8alpha-FAD cysteine modification.

The protein belongs to the MSOX/MTOX family. MTOX subfamily. As to quaternary structure, monomer. FAD serves as cofactor.

The enzyme catalyses N(alpha)-methyl-L-tryptophan + O2 + H2O = L-tryptophan + formaldehyde + H2O2. Catalyzes the oxidative demethylation of N-methyl-L-tryptophan. The polypeptide is N-methyl-L-tryptophan oxidase (Yersinia pseudotuberculosis serotype O:1b (strain IP 31758)).